The following is a 378-amino-acid chain: tRNA (guanine(37)-N(1))-methyltransferase (378 aa).

S-adenosyl-L-methionine contacts are provided by residues H196, 234–235 (DL), 262–263 (DA), and N282.

It belongs to the class I-like SAM-binding methyltransferase superfamily. TRM5/TYW2 family. Monomer.

The protein localises to the mitochondrion matrix. It localises to the nucleus. It is found in the cytoplasm. The catalysed reaction is guanosine(37) in tRNA + S-adenosyl-L-methionine = N(1)-methylguanosine(37) in tRNA + S-adenosyl-L-homocysteine + H(+). Specifically methylates the N1 position of guanosine-37 in various cytoplasmic and mitochondrial tRNAs. Methylation is not dependent on the nature of the nucleoside 5' of the target nucleoside. This is the first step in the biosynthesis of wybutosine (yW), a modified base adjacent to the anticodon of tRNAs and required for accurate decoding. This is tRNA (guanine(37)-N(1))-methyltransferase from Trichomonas vaginalis (strain ATCC PRA-98 / G3).